The sequence spans 998 residues: Protein Smaug (998 aa).

Residues 1–37 show a composition bias toward polar residues; the sequence is MKYATGTDNAMTSGISGQTNSSNSASNEMQPTTSTPT. Disordered regions lie at residues 1–45, 50–69, and 329–370; these read MKYA…EATS, TATY…QSQP, and LCPA…GSSS. The segment covering 329–338 has biased composition (low complexity); that stretch reads LCPASGSRSS. Residues S564 and S575 each carry the phosphoserine modification. The tract at residues 583–763 is interaction with cup; the sequence is EFKPNYIKFH…KDLKFKLSKM (181 aa). An SAM domain is found at 600–654; it reads GIGLWLKSLRLHKYIELFKNMTYEEMLLITEDFLQSVGVTKGASHKLALCIDKLK. Disordered stretches follow at residues 773–892 and 943–977; these read HVKP…MQQM and NGSN…QQPK. Polar residues-rich tracts occupy residues 801–822 and 854–864; these read KSGS…NFSL and HQPQYKSSSYP. At S971 the chain carries Phosphoserine.

The protein belongs to the SMAUG family. As to quaternary structure, interacts with oskar (osk). Binds to the 3'-UTR of nos. Interacts with cup, which in turn recruits eIF4-E, leading to an indirect interaction between smg and eIF4-E that prevents mRNA translation.

The protein resides in the cytoplasm. In terms of biological role, translation regulator that binds to the 3'-UTR of specific mRNAs such as nanos (nos) and prevent their translation. Prevents translation of unlocalized nos in the bulk cytoplasm via the recruitment of cup. This chain is Protein Smaug, found in Drosophila sechellia (Fruit fly).